Consider the following 589-residue polypeptide: Mediator of RNA polymerase II transcription subunit 26 (589 aa).

The 78-residue stretch at 10–87 (QMRDRLLQAI…RNWQKLIEPG (78 aa)) folds into the TFIIS N-terminal domain. Disordered stretches follow at residues 83-233 (LIEP…TKLP), 247-320 (ARVD…DGPS), and 363-441 (LETK…PIPE). Residues 190–213 (LLEKDDEVPSDRIRLEHLDNDRHN) are compositionally biased toward basic and acidic residues. Positions 259–268 (SPRYSSSPRS) are enriched in low complexity. Positions 276 to 297 (KRSTTYAPKGTLSSPSLNSAQV) are enriched in polar residues. 2 stretches are compositionally biased toward basic and acidic residues: residues 398–412 (SEDR…RRLT) and 424–435 (TPKESHQEEECH).

It belongs to the Mediator complex subunit 26 family. Component of the Mediator complex.

The protein resides in the nucleus. Its function is as follows. Component of the Mediator complex, a coactivator involved in the regulated transcription of nearly all RNA polymerase II-dependent genes. Mediator functions as a bridge to convey information from gene-specific regulatory proteins to the basal RNA polymerase II transcription machinery. Mediator is recruited to promoters by direct interactions with regulatory proteins and serves as a scaffold for the assembly of a functional preinitiation complex with RNA polymerase II and the general transcription factors. This chain is Mediator of RNA polymerase II transcription subunit 26 (med26), found in Danio rerio (Zebrafish).